A 150-amino-acid polypeptide reads, in one-letter code: SsrA-binding protein (150 aa).

Belongs to the SmpB family.

The protein localises to the cytoplasm. Functionally, required for rescue of stalled ribosomes mediated by trans-translation. Binds to transfer-messenger RNA (tmRNA), required for stable association of tmRNA with ribosomes. tmRNA and SmpB together mimic tRNA shape, replacing the anticodon stem-loop with SmpB. tmRNA is encoded by the ssrA gene; the 2 termini fold to resemble tRNA(Ala) and it encodes a 'tag peptide', a short internal open reading frame. During trans-translation Ala-aminoacylated tmRNA acts like a tRNA, entering the A-site of stalled ribosomes, displacing the stalled mRNA. The ribosome then switches to translate the ORF on the tmRNA; the nascent peptide is terminated with the 'tag peptide' encoded by the tmRNA and targeted for degradation. The ribosome is freed to recommence translation, which seems to be the essential function of trans-translation. The polypeptide is SsrA-binding protein (Polynucleobacter asymbioticus (strain DSM 18221 / CIP 109841 / QLW-P1DMWA-1) (Polynucleobacter necessarius subsp. asymbioticus)).